Here is a 71-residue protein sequence, read N- to C-terminus: UPF0346 protein str0441 (71 aa).

Belongs to the UPF0346 family.

The polypeptide is UPF0346 protein str0441 (Streptococcus thermophilus (strain CNRZ 1066)).